Reading from the N-terminus, the 324-residue chain is Beta-ketoacyl-[acyl-carrier-protein] synthase III (324 aa).

Catalysis depends on residues Cys112 and His249. The segment at 250 to 254 is ACP-binding; the sequence is QANRR. Asn279 is an active-site residue.

The protein belongs to the thiolase-like superfamily. FabH family. Homodimer.

It localises to the cytoplasm. The catalysed reaction is malonyl-[ACP] + acetyl-CoA + H(+) = 3-oxobutanoyl-[ACP] + CO2 + CoA. It participates in lipid metabolism; fatty acid biosynthesis. Its function is as follows. Catalyzes the condensation reaction of fatty acid synthesis by the addition to an acyl acceptor of two carbons from malonyl-ACP. Catalyzes the first condensation reaction which initiates fatty acid synthesis and may therefore play a role in governing the total rate of fatty acid production. Possesses both acetoacetyl-ACP synthase and acetyl transacylase activities. Its substrate specificity determines the biosynthesis of branched-chain and/or straight-chain of fatty acids. In Streptococcus equi subsp. zooepidemicus (strain MGCS10565), this protein is Beta-ketoacyl-[acyl-carrier-protein] synthase III.